The following is a 249-amino-acid chain: tRNA pseudouridine synthase A (249 aa).

Residue Asp53 is the Nucleophile of the active site. Tyr111 lines the substrate pocket.

It belongs to the tRNA pseudouridine synthase TruA family. As to quaternary structure, homodimer.

It carries out the reaction uridine(38/39/40) in tRNA = pseudouridine(38/39/40) in tRNA. In terms of biological role, formation of pseudouridine at positions 38, 39 and 40 in the anticodon stem and loop of transfer RNAs. This Streptococcus suis (strain 05ZYH33) protein is tRNA pseudouridine synthase A.